The sequence spans 317 residues: Neuroguidin-A (317 aa).

2 disordered regions span residues 125-170 (ENDP…SKVK) and 280-317 (SALT…RRRH). Residues 146-157 (DERESDSGEEGA) show a composition bias toward acidic residues. The span at 297 to 317 (KKSKKGPKKSKKKKGFSRRRH) shows a compositional bias: basic residues.

This sequence belongs to the SAS10 family. In terms of assembly, part of the small subunit (SSU) processome, composed of more than 70 proteins and the RNA chaperone small nucleolar RNA (snoRNA) U3.

The protein resides in the nucleus. It localises to the nucleolus. The protein localises to the chromosome. Its subcellular location is the centromere. It is found in the cytoplasm. The protein resides in the cell projection. It localises to the axon. The protein localises to the dendrite. Its subcellular location is the filopodium. Part of the small subunit (SSU) processome, first precursor of the small eukaryotic ribosomal subunit. During the assembly of the SSU processome in the nucleolus, many ribosome biogenesis factors, an RNA chaperone and ribosomal proteins associate with the nascent pre-rRNA and work in concert to generate RNA folding, modifications, rearrangements and cleavage as well as targeted degradation of pre-ribosomal RNA by the RNA exosome. Its dissociation from the complex determines the transition from state pre-A1 to state pre-A1*. May inhibit mRNA translation. The chain is Neuroguidin-A (ngdn-a) from Xenopus laevis (African clawed frog).